Reading from the N-terminus, the 244-residue chain is Glutathione S-transferase theta-2 (244 aa).

Residues 2 to 82 (GLELYLDLLS…YLSSKYQVAD (81 aa)) enclose the GST N-terminal domain. Glutathione contacts are provided by residues 40–41 (HM), 53–54 (KV), 66–67 (ES), and 104–107 (DNIR). The GST C-terminal domain occupies 88-230 (DLQARAQVHE…AKKMLPVPPP (143 aa)).

It belongs to the GST superfamily. Theta family. As to quaternary structure, homodimer. In terms of tissue distribution, in liver, highest expression found in central vein limiting plate hepatocytes. Also expressed in interlobular bile duct epithelial cells. In lung, expressed in club cells and ciliated cells of the bronchiolar epithelium and in type II alveolar cells of the lung parenchyma.

The protein resides in the cytoplasm. Its subcellular location is the cytosol. It localises to the nucleus. It catalyses the reaction RX + glutathione = an S-substituted glutathione + a halide anion + H(+). In terms of biological role, conjugation of reduced glutathione to a wide number of exogenous and endogenous hydrophobic electrophiles. The sequence is that of Glutathione S-transferase theta-2 from Mus musculus (Mouse).